The sequence spans 983 residues: Seizure protein 6 homolog (983 aa).

Positions 1-19 (MRPAALLLLPSLLALLVHG) are cleaved as a signal peptide. Disordered stretches follow at residues 80-132 (GQEK…WSLE) and 148-194 (PGMA…QTTG). Residues 101-112 (NQDSRPVFTSPT) are compositionally biased toward polar residues. The segment covering 154–167 (TPGPGERPNTPPPS) has biased composition (pro residues). Residue asparagine 278 is glycosylated (N-linked (GlcNAc...) asparagine). The Sushi 1 domain maps to 344–403 (LSCHFPRRPAYGAVTVTSLHPGGSARFRCATGYQLKGARLLTCLNATQPFWDSQEPVCIA). 12 disulfide bridges follow: cysteine 346-cysteine 386, cysteine 372-cysteine 401, cysteine 405-cysteine 432, cysteine 521-cysteine 563, cysteine 548-cysteine 578, cysteine 582-cysteine 608, cysteine 699-cysteine 741, cysteine 727-cysteine 754, cysteine 760-cysteine 802, cysteine 788-cysteine 819, cysteine 827-cysteine 869, and cysteine 855-cysteine 884. N-linked (GlcNAc...) asparagine glycans are attached at residues asparagine 388, asparagine 425, and asparagine 530. The CUB 1 domain maps to 405–516 (CGGVIRNATT…AGMALRYEAF (112 aa)). Positions 519-580 (GHCYEPFVKY…WNETEPACRA (62 aa)) constitute a Sushi 2 domain. Positions 582-693 (CSGETTDSAG…QGFVIHFFEV (112 aa)) constitute a CUB 2 domain. 3 consecutive Sushi domains span residues 697 to 756 (DTCP…SCQR), 758 to 821 (TSCL…KCLL), and 825 to 886 (KPCH…ICRA). Residues 915-935 (LAAAIFLPLVAMALLVGGVYL) form a helical membrane-spanning segment.

The protein belongs to the SEZ6 family.

Its subcellular location is the cell membrane. Functionally, may play a role in cell-cell recognition and in neuronal membrane signaling. Seems to be important for the achievement of the necessary balance between dendrite elongation and branching during the elaboration of a complex dendritic arbor. Involved in the development of appropriate excitatory synaptic connectivity. The polypeptide is Seizure protein 6 homolog (SEZ6) (Bos taurus (Bovine)).